An 84-amino-acid polypeptide reads, in one-letter code: MAITKNMLVVLLLTIIFVTSSVHCSDSALGIGIKEDWEVCFSIDPCLTGEGTLGCTKWCRNHINLSLVGYCRTDPEHCCCVAEK.

The signal sequence occupies residues 1–24; that stretch reads MAITKNMLVVLLLTIIFVTSSVHC. Disulfide bonds link C40-C80, C46-C71, C55-C78, and C59-C79.

This sequence belongs to the DEFL family.

The protein resides in the secreted. The chain is Defensin-like protein 116 from Arabidopsis thaliana (Mouse-ear cress).